The following is a 337-amino-acid chain: MGAAGSSALARFVLLAQSRPGWLGVAALGLTAVALGAVAWRRAWPTRRRRLLQQVGTVAQLWIYPVKSCKGVPVSEAECTAMGLRSGNLRDRFWLVINQEGNMVTARQEPRLVLISLTCDGDTLTLSAAYTKDLLLPIKTPTTNAVHKCRVHGLEIEGRDCGEATAQWITSFLKSQPYRLVHFEPHMRPRRPHQIADLFRPKDQIAYSDTSPFLILSEASLADLNSRLEKKVKATNFRPNIVISGCDVYAEDSWDELLIGDVELKRVMACSRCILTTVDPDTGVMSRKEPLETLKSYRQCDPSERKLYGKSPLFGQYFVLENPGTIKVGDPVYLLGQ.

Glycine 2 carries the N-myristoyl glycine lipid modification. The Mitochondrial matrix portion of the chain corresponds to 2 to 20; the sequence is GAAGSSALARFVLLAQSRP. Residues 21-40 traverse the membrane as a helical; Signal-anchor for type II membrane protein segment; it reads GWLGVAALGLTAVALGAVAW. Over 41–337 the chain is Cytoplasmic; that stretch reads RRAWPTRRRR…VGDPVYLLGQ (297 aa). Mo-molybdopterin is bound by residues lysine 67, serine 68, and arginine 92. The segment at 93–183 is MOSC N-terminal region; the sequence is FWLVINQEGN…KSQPYRLVHF (91 aa). The MOSC domain maps to 187–335; sequence MRPRRPHQIA…IKVGDPVYLL (149 aa). Residues threonine 210, serine 211, arginine 238, asparagine 240, serine 271, arginine 272, cysteine 273, and tyrosine 317 each contribute to the Mo-molybdopterin site.

As to quaternary structure, component of a complex composed of cytochrome b5, NADH-cytochrome b5 reductase and MTARC1. Mo-molybdopterin serves as cofactor.

The protein resides in the mitochondrion outer membrane. Its subcellular location is the membrane. The enzyme catalyses N(omega)-hydroxy-L-arginine + 2 Fe(II)-[cytochrome b5] + 2 H(+) = L-arginine + 2 Fe(III)-[cytochrome b5] + H2O. Its function is as follows. Catalyzes the reduction of N-oxygenated molecules, acting as a counterpart of cytochrome P450 and flavin-containing monooxygenases in metabolic cycles. As a component of prodrug-converting system, reduces a multitude of N-hydroxylated prodrugs particularly amidoximes, leading to increased drug bioavailability. May be involved in mitochondrial N(omega)-hydroxy-L-arginine (NOHA) reduction, regulating endogenous nitric oxide levels and biosynthesis. Postulated to cleave the N-OH bond of N-hydroxylated substrates in concert with electron transfer from NADH to cytochrome b5 reductase then to cytochrome b5, the ultimate electron donor that primes the active site for substrate reduction. This is Mitochondrial amidoxime-reducing component 1 from Homo sapiens (Human).